We begin with the raw amino-acid sequence, 425 residues long: UDP-N-acetylglucosamine 1-carboxyvinyltransferase (425 aa).

23-24 contacts phosphoenolpyruvate; it reads KN. UDP-N-acetyl-alpha-D-glucosamine is bound at residue Arg100. Cys124 functions as the Proton donor in the catalytic mechanism. The residue at position 124 (Cys124) is a 2-(S-cysteinyl)pyruvic acid O-phosphothioketal. UDP-N-acetyl-alpha-D-glucosamine contacts are provided by Asp313 and Ile335.

This sequence belongs to the EPSP synthase family. MurA subfamily.

It localises to the cytoplasm. It carries out the reaction phosphoenolpyruvate + UDP-N-acetyl-alpha-D-glucosamine = UDP-N-acetyl-3-O-(1-carboxyvinyl)-alpha-D-glucosamine + phosphate. The protein operates within cell wall biogenesis; peptidoglycan biosynthesis. In terms of biological role, cell wall formation. Adds enolpyruvyl to UDP-N-acetylglucosamine. The protein is UDP-N-acetylglucosamine 1-carboxyvinyltransferase of Wolbachia pipientis wMel.